The primary structure comprises 136 residues: MILGIGTDLCDIRRIESSLERFGDRFTHRVFTDGERGKCDRRAARGPSYARRFAAKEACAKALGTGMSQGVFWRDMEVVNLPSGQPTLNLTGGAREHLARMVPAGHEARLHLTLTDEPPLAQAFVIIEAVPITATS.

2 residues coordinate Mg(2+): aspartate 8 and glutamate 57.

Belongs to the P-Pant transferase superfamily. AcpS family. Requires Mg(2+) as cofactor.

The protein resides in the cytoplasm. The enzyme catalyses apo-[ACP] + CoA = holo-[ACP] + adenosine 3',5'-bisphosphate + H(+). In terms of biological role, transfers the 4'-phosphopantetheine moiety from coenzyme A to a Ser of acyl-carrier-protein. The chain is Holo-[acyl-carrier-protein] synthase from Methylorubrum extorquens (strain CM4 / NCIMB 13688) (Methylobacterium extorquens).